Consider the following 171-residue polypeptide: Photosystem I assembly protein Ycf3 (171 aa).

TPR repeat units lie at residues 35 to 68 (AFTY…EIDP), 72 to 105 (SYIL…NPSL), and 120 to 153 (GEQA…APSN).

The protein belongs to the Ycf3 family.

Its subcellular location is the plastid. It is found in the chloroplast thylakoid membrane. In terms of biological role, essential for the assembly of the photosystem I (PSI) complex. May act as a chaperone-like factor to guide the assembly of the PSI subunits. The sequence is that of Photosystem I assembly protein Ycf3 from Angiopteris evecta (Mule's foot fern).